The following is a 268-amino-acid chain: Undecaprenyl-diphosphatase (268 aa).

A run of 7 helical transmembrane segments spans residues 42-62 (VPGKVFEVVIQLGAILAICVL), 86-106 (AIFVALIPAGLLGVLYHDFIL), 108-128 (VLFTPYVVCAALITGGIAIVV), 158-178 (IALVPGVSRSGATILGALLVG), 184-204 (AAEFSFFLAIPVMLGASVVSL), 218-238 (LIAAGFIAAFISALLVVKWLV), and 246-266 (FTVFGWYRILFGSLLLIYFSL).

The protein belongs to the UppP family.

It is found in the cell inner membrane. It catalyses the reaction di-trans,octa-cis-undecaprenyl diphosphate + H2O = di-trans,octa-cis-undecaprenyl phosphate + phosphate + H(+). Catalyzes the dephosphorylation of undecaprenyl diphosphate (UPP). Confers resistance to bacitracin. This chain is Undecaprenyl-diphosphatase, found in Parvibaculum lavamentivorans (strain DS-1 / DSM 13023 / NCIMB 13966).